The sequence spans 337 residues: Ribosomal RNA small subunit methyltransferase H (337 aa).

S-adenosyl-L-methionine-binding positions include 36-38, Asp56, Phe82, Asp100, and Gln107; that span reads GGH. The interval 317–337 is disordered; the sequence is RRSGRIPNPQSPIPASQGDAR.

The protein belongs to the methyltransferase superfamily. RsmH family.

The protein localises to the cytoplasm. It carries out the reaction cytidine(1402) in 16S rRNA + S-adenosyl-L-methionine = N(4)-methylcytidine(1402) in 16S rRNA + S-adenosyl-L-homocysteine + H(+). In terms of biological role, specifically methylates the N4 position of cytidine in position 1402 (C1402) of 16S rRNA. This is Ribosomal RNA small subunit methyltransferase H from Xanthomonas oryzae pv. oryzae (strain KACC10331 / KXO85).